Here is a 101-residue protein sequence, read N- to C-terminus: Small ribosomal subunit protein uS14 (101 aa).

Positions Met-1 to Asn-10 are enriched in basic and acidic residues. A disordered region spans residues Met-1 to Lys-23.

This sequence belongs to the universal ribosomal protein uS14 family. In terms of assembly, part of the 30S ribosomal subunit. Contacts proteins S3 and S10.

Binds 16S rRNA, required for the assembly of 30S particles and may also be responsible for determining the conformation of the 16S rRNA at the A site. The sequence is that of Small ribosomal subunit protein uS14 from Nitrobacter hamburgensis (strain DSM 10229 / NCIMB 13809 / X14).